A 668-amino-acid polypeptide reads, in one-letter code: Protein ENTREP3 (668 aa).

3 helical membrane-spanning segments follow: residues 34-54 (LLTL…FSMV), 67-87 (SCPS…IVSW), and 91-111 (FTLV…LSMA). Residue Asn160 is glycosylated (N-linked (GlcNAc...) asparagine). The helical transmembrane segment at 174-194 (LFSVCGLTICAAIICTLSAIV) threads the bilayer. Residues Ser358 and Ser389 each carry the phosphoserine modification. 3 disordered regions span residues 386–419 (FEES…PTAA), 442–503 (RVPR…SSDT), and 550–570 (SAEK…SGPA). Residues 398–407 (AARSYSCSAP) are compositionally biased toward low complexity. Ser493 is modified (phosphoserine). The residue at position 574 (Ser574) is a Phosphoserine. Disordered stretches follow at residues 597 to 620 (KAPD…WGRP) and 645 to 668 (GRRL…ETGL). Positions 655-668 (HSLSLNGGSRETGL) are enriched in polar residues.

The protein belongs to the ENTREP family. As to quaternary structure, may interact with WWOX. As to expression, widely expressed.

It is found in the membrane. The protein is Protein ENTREP3 of Homo sapiens (Human).